The following is a 215-amino-acid chain: Probable phosphoglycerate mutase GpmB (215 aa).

Residues 8–15, 21–22, Arg58, 82–85, and 151–152 contribute to the substrate site; these read RHGETEWN, QG, ELDM, and GI. Residue His9 is the Tele-phosphohistidine intermediate of the active site. The active-site Proton donor/acceptor is Glu82.

It belongs to the phosphoglycerate mutase family. GpmB subfamily.

The enzyme catalyses (2R)-2-phosphoglycerate = (2R)-3-phosphoglycerate. It participates in carbohydrate degradation; glycolysis; pyruvate from D-glyceraldehyde 3-phosphate: step 3/5. The sequence is that of Probable phosphoglycerate mutase GpmB from Proteus mirabilis (strain HI4320).